The primary structure comprises 397 residues: Erythromycin C-12 hydroxylase (397 aa).

74–75 serves as a coordination point for substrate; sequence HE. H81 and R85 together coordinate heme. Q278 serves as a coordination point for substrate. R279 provides a ligand contact to heme. Residues 307–322 show a composition bias toward basic and acidic residues; it reads RDSDAHDDPDRFDPSR. The interval 307-326 is disordered; that stretch reads RDSDAHDDPDRFDPSRKSGG. Heme is bound by residues H337 and C339.

It belongs to the cytochrome P450 family. In terms of assembly, monomer. Requires heme b as cofactor.

The catalysed reaction is erythromycin D + NADPH + O2 + H(+) = erythromycin C + NADP(+) + H2O. It functions in the pathway antibiotic biosynthesis; erythromycin biosynthesis. Responsible for the C-12 hydroxylation of the macrolactone ring of erythromycin. Thus, EryK catalyzes the hydroxylation of erythromycin D (ErD) at the C-12 position to produce erythromycin C (ErC). Erythromycin B (ErB) is not a substrate for this enzyme. The protein is Erythromycin C-12 hydroxylase (eryK) of Saccharopolyspora erythraea (strain ATCC 11635 / DSM 40517 / JCM 4748 / NBRC 13426 / NCIMB 8594 / NRRL 2338).